The primary structure comprises 152 residues: Synaptobrevin (152 aa).

Over residues 1–16 the composition is skewed to polar residues; it reads MENNEAPSPSGSNNND. The disordered stretch occupies residues 1 to 30; that stretch reads MENNEAPSPSGSNNNDFPILPPPPNANDNY. Residues 1–110 are Cytoplasmic-facing; that stretch reads MENNEAPSPS…KRKQWWANMK (110 aa). Positions 47-107 constitute a v-SNARE coiled-coil homology domain; sequence KLQQTQAKVD…GKLKRKQWWA (61 aa). The helical; Anchor for type IV membrane protein transmembrane segment at 111–130 threads the bilayer; that stretch reads MMIILGVIAVVLLIIVLVSV. Topologically, residues 131–152 are vesicular; the sequence is WPSSSDSGSGGGNKAITQAPPH. The segment at 133 to 152 is disordered; that stretch reads SSSDSGSGGGNKAITQAPPH.

It belongs to the synaptobrevin family. As to quaternary structure, part of the SNARE core complex containing Snap25 and syntaxin. Ubiquitinated by gzl, regulating endocytic trafficking. In wing imaginal disks, ubiquitination by gzl promotes transcytosis of wingless (wg) to the basolateral surface. In terms of tissue distribution, not nervous system-specific; abundant in cells of the gut and Malpighian tubules.

It localises to the cytoplasmic vesicle. The protein localises to the secretory vesicle. The protein resides in the synaptic vesicle membrane. It is found in the cell membrane. Functionally, involved in the targeting and/or fusion of transport vesicles to their target membrane. The sequence is that of Synaptobrevin from Drosophila melanogaster (Fruit fly).